The sequence spans 861 residues: Importin subunit beta-1 (861 aa).

Ser2 carries the post-translational modification N-acetylserine. HEAT repeat units lie at residues 3–35 (TAEF…LSND), 37–66 (FLQF…LTLK), 90–129 (PEAK…ELPH), 134–164 (ELMK…YMCE), 177–208 (SNNI…LADS), 219–255 (EGER…MSLY), 260–306 (KPYM…ELAQ), 317–362 (FALS…AQNC), 367–395 (LEPV…AFGS), 402–442 (KVQR…ADSV), 452–484 (LPGV…VEQL), 496–530 (YPAL…MVEY), 536–586 (AETS…VIRK), 592–629 (EPVA…AASL), 634–669 (EKYL…ISNS), 675–713 (RRYS…ASNI), 718–764 (IPYL…IVAG), 773–812 (FPYV…IAAM), and 819–859 (KQFY…KRQL). An Importin N-terminal domain is found at 25–106 (SETQLKKLSN…KTNALTALVS (82 aa)). Residue Ser836 is modified to Phosphoserine.

This sequence belongs to the importin beta family. Importin beta-1 subfamily. Forms a complex with the importin alpha subunit (SRP1/KAP60). Interacts with Ran (GSP1); interacts specifically with the GTP-bound form of Ran (GTP-Ran), protecting it from GTP hydrolysis and nucleotide exchange. Interacts with nucleoporin NUP1.

The protein localises to the cytoplasm. The protein resides in the nucleus. Its subcellular location is the nuclear pore complex. In terms of biological role, importin beta subunit that functions in nuclear protein import through association with the importin alpha subunit, which binds to the classical nuclear localization signal (cNLS) in cargo substrates. Docking of the importin/substrate complex to the nuclear pore complex (NPC) is mediated by importin beta through binding to nucleoporin FxFG repeats and the complex is subsequently translocated through the pore by an energy requiring, Ran-dependent mechanism. At the nucleoplasmic side of the NPC, GTP-Ran binds to importin beta and the three components separate, leading to release of the cargo. Importin alpha and beta are re-exported from the nucleus to the cytoplasm where GTP hydrolysis releases Ran from importin beta. The directionality of nuclear import is thought to be conferred by an asymmetric distribution of the GTP- and GDP-bound forms of Ran between the cytoplasm and nucleus. Mediates the nuclear import of histones H2A and H2B. Mediates the nuclear import of transcription factor GCN4. The sequence is that of Importin subunit beta-1 from Saccharomyces cerevisiae (strain ATCC 204508 / S288c) (Baker's yeast).